Here is a 123-residue protein sequence, read N- to C-terminus: Fluoride-specific ion channel FluC (123 aa).

A run of 4 helical transmembrane segments spans residues M7 to L27, M39 to F59, F68 to F88, and L101 to A121. Na(+)-binding residues include G75 and S78.

It belongs to the fluoride channel Fluc/FEX (TC 1.A.43) family.

The protein resides in the cell membrane. The catalysed reaction is fluoride(in) = fluoride(out). Its activity is regulated as follows. Na(+) is not transported, but it plays an essential structural role and its presence is essential for fluoride channel function. Functionally, fluoride-specific ion channel. Important for reducing fluoride concentration in the cell, thus reducing its toxicity. In Thermococcus kodakarensis (strain ATCC BAA-918 / JCM 12380 / KOD1) (Pyrococcus kodakaraensis (strain KOD1)), this protein is Fluoride-specific ion channel FluC.